The following is a 195-amino-acid chain: Early E3 22.2 kDa glycoprotein (195 aa).

6 N-linked (GlcNAc...) asparagine; by host glycosylation sites follow: N20, N61, N76, N88, N126, and N139.

This is Early E3 22.2 kDa glycoprotein from Canine adenovirus serotype 1 (strain Glaxo) (CAdV-1).